Reading from the N-terminus, the 461-residue chain is Pancreatic triacylglycerol lipase (461 aa).

A signal peptide spans 1–12 (WTLSLLLGAVVG). 2 cysteine pairs are disulfide-bonded: Cys16-Cys22 and Cys103-Cys114. Ser165 acts as the Nucleophile in catalysis. Asp189 acts as the Charge relay system in catalysis. Positions 200, 203, 205, and 208 each coordinate Ca(2+). A disulfide bridge connects residues Cys250 and Cys274. His276 (charge relay system) is an active-site residue. Cystine bridges form between Cys298–Cys309, Cys312–Cys317, and Cys445–Cys461. The PLAT domain occupies 351 to 461 (WRYRVDVTLS…EDVLLTLTAC (111 aa)).

This sequence belongs to the AB hydrolase superfamily. Lipase family. Forms a 1:1 stoichiometric complex with (pro)colipase/CLPS.

The protein localises to the secreted. The enzyme catalyses a triacylglycerol + H2O = a diacylglycerol + a fatty acid + H(+). The catalysed reaction is 1,2,3-tributanoylglycerol + H2O = dibutanoylglycerol + butanoate + H(+). It catalyses the reaction 1,2,3-tri-(9Z-octadecenoyl)-glycerol + H2O = di-(9Z)-octadecenoylglycerol + (9Z)-octadecenoate + H(+). It carries out the reaction all-trans-retinyl hexadecanoate + H2O = all-trans-retinol + hexadecanoate + H(+). The enzyme catalyses 1,2-di-(9Z-octadecenoyl)-glycerol + H2O = (9Z-octadecenoyl)-glycerol + (9Z)-octadecenoate + H(+). Inhibited by bile salts, is reactivated by (pro)colipase/CLPS. In terms of biological role, plays an important role in fat metabolism. It preferentially splits the esters of long-chain fatty acids at positions 1 and 3, producing mainly 2-monoacylglycerol and free fatty acids, and shows considerably higher activity against insoluble emulsified substrates than against soluble ones. The protein is Pancreatic triacylglycerol lipase (PNLIP) of Equus caballus (Horse).